The primary structure comprises 874 residues: Alanine--tRNA ligase (874 aa).

The Zn(2+) site is built by histidine 562, histidine 566, cysteine 665, and histidine 669.

This sequence belongs to the class-II aminoacyl-tRNA synthetase family. It depends on Zn(2+) as a cofactor.

It localises to the cytoplasm. The enzyme catalyses tRNA(Ala) + L-alanine + ATP = L-alanyl-tRNA(Ala) + AMP + diphosphate. Functionally, catalyzes the attachment of alanine to tRNA(Ala) in a two-step reaction: alanine is first activated by ATP to form Ala-AMP and then transferred to the acceptor end of tRNA(Ala). Also edits incorrectly charged Ser-tRNA(Ala) and Gly-tRNA(Ala) via its editing domain. This chain is Alanine--tRNA ligase, found in Pseudomonas putida (strain ATCC 47054 / DSM 6125 / CFBP 8728 / NCIMB 11950 / KT2440).